Reading from the N-terminus, the 231-residue chain is U1 small nuclear ribonucleoprotein C-1 (231 aa).

The segment at 4–36 adopts a Matrin-type zinc-finger fold; the sequence is YYCDYCDTYLTHDSPSVRKQHNAGYKHKANVRT. Composition is skewed to pro residues over residues 117–127, 134–159, and 167–178; these read APGIPGYPGGP, GAPP…PPGS, and LPRPPTLPPPTS. The segment at 117 to 231 is disordered; the sequence is APGIPGYPGG…SYAQPSEGNH (115 aa). Low complexity predominate over residues 181–193; it reads PGAPIPNSAAPPA. Pro residues predominate over residues 199–217; that stretch reads PPAPAGPTSGAPPAPPTAP.

It belongs to the U1 small nuclear ribonucleoprotein C family. U1 snRNP is composed of the 7 core Sm proteins B/B', D1, D2, D3, E, F and G that assemble in a heptameric protein ring on the Sm site of the small nuclear RNA to form the core snRNP, and at least 3 U1 snRNP-specific proteins U1-70K, U1-A and U1-C. U1-C interacts with U1 snRNA and the 5' splice-site region of the pre-mRNA.

The protein resides in the nucleus. Component of the spliceosomal U1 snRNP, which is essential for recognition of the pre-mRNA 5' splice-site and the subsequent assembly of the spliceosome. U1-C is directly involved in initial 5' splice-site recognition for both constitutive and regulated alternative splicing. The interaction with the 5' splice-site seems to precede base-pairing between the pre-mRNA and the U1 snRNA. Stimulates commitment or early (E) complex formation by stabilizing the base pairing of the 5' end of the U1 snRNA and the 5' splice-site region. This is U1 small nuclear ribonucleoprotein C-1 from Sorghum bicolor (Sorghum).